The chain runs to 480 residues: Flap endonuclease 1 (480 aa).

Positions 1-106 (MGIKGLTKFI…SELEKRGEKR (106 aa)) are N-domain. Asp-34 is a Mg(2+) binding site. DNA is bound by residues Arg-47 and Arg-72. Residues Asp-88, Glu-160, Glu-162, Asp-181, and Asp-183 each contribute to the Mg(2+) site. Residues 124-266 (EIKKQSGRTV…KTAYNLIKEY (143 aa)) form an I-domain region. A DNA-binding site is contributed by Glu-160. DNA is bound by residues Gly-244 and Asp-246. Asp-246 serves as a coordination point for Mg(2+). The segment at 349 to 357 (TQRRLDTFF) is interaction with PCNA. Residues 379–461 (TKGKGKKREI…NIKNENVKED (83 aa)) are disordered. Positions 404–428 (NVKDEKKNNEKVDELKNKSDENLVK) are enriched in basic and acidic residues. Positions 429-438 (DEEDDQDDYD) are enriched in acidic residues.

It belongs to the XPG/RAD2 endonuclease family. FEN1 subfamily. Interacts with PCNA. Three molecules of FEN1 bind to one PCNA trimer with each molecule binding to one PCNA monomer. PCNA stimulates the nuclease activity without altering cleavage specificity. Mg(2+) serves as cofactor. In terms of processing, phosphorylated. Phosphorylation upon DNA damage induces relocalization to the nuclear plasma.

The protein localises to the nucleus. It localises to the nucleolus. The protein resides in the nucleoplasm. Its subcellular location is the mitochondrion. Inhibited by monovalent metal ions. Its function is as follows. Structure-specific nuclease with 5'-flap endonuclease and 5'-3' exonuclease activities involved in DNA replication and repair. During DNA replication, cleaves the 5'-overhanging flap structure that is generated by displacement synthesis when DNA polymerase encounters the 5'-end of a downstream Okazaki fragment. It enters the flap from the 5'-end and then tracks to cleave the flap base, leaving a nick for ligation. Also involved in the long patch base excision repair (LP-BER) pathway, by cleaving within the apurinic/apyrimidinic (AP) site-terminated flap. Acts as a genome stabilization factor that prevents flaps from equilibrating into structures that lead to duplications and deletions. Also possesses 5'-3' exonuclease activity on nicked or gapped double-stranded DNA, and exhibits RNase H activity. Also involved in replication and repair of rDNA and in repairing mitochondrial DNA. This chain is Flap endonuclease 1, found in Plasmodium yoelii yoelii.